Here is a 208-residue protein sequence, read N- to C-terminus: ATP-dependent Clp protease proteolytic subunit (208 aa).

S107 (nucleophile) is an active-site residue. H132 is an active-site residue.

It belongs to the peptidase S14 family. As to quaternary structure, fourteen ClpP subunits assemble into 2 heptameric rings which stack back to back to give a disk-like structure with a central cavity, resembling the structure of eukaryotic proteasomes.

It localises to the cytoplasm. The enzyme catalyses Hydrolysis of proteins to small peptides in the presence of ATP and magnesium. alpha-casein is the usual test substrate. In the absence of ATP, only oligopeptides shorter than five residues are hydrolyzed (such as succinyl-Leu-Tyr-|-NHMec, and Leu-Tyr-Leu-|-Tyr-Trp, in which cleavage of the -Tyr-|-Leu- and -Tyr-|-Trp bonds also occurs).. Functionally, cleaves peptides in various proteins in a process that requires ATP hydrolysis. Has a chymotrypsin-like activity. Plays a major role in the degradation of misfolded proteins. The polypeptide is ATP-dependent Clp protease proteolytic subunit (Methylorubrum populi (strain ATCC BAA-705 / NCIMB 13946 / BJ001) (Methylobacterium populi)).